The chain runs to 689 residues: Glycine--tRNA ligase beta subunit (689 aa).

Belongs to the class-II aminoacyl-tRNA synthetase family. Tetramer of two alpha and two beta subunits.

The protein resides in the cytoplasm. The catalysed reaction is tRNA(Gly) + glycine + ATP = glycyl-tRNA(Gly) + AMP + diphosphate. The chain is Glycine--tRNA ligase beta subunit from Salmonella choleraesuis (strain SC-B67).